A 334-amino-acid polypeptide reads, in one-letter code: Ornithine carbamoyltransferase (334 aa).

Residues 57–60 (STRT), Gln84, Arg108, and 135–138 (HPTQ) each bind carbamoyl phosphate. Residues Asn168, Asp233, and 237–238 (SM) each bind L-ornithine. Residues 275–276 (CL) and Arg320 each bind carbamoyl phosphate.

It belongs to the aspartate/ornithine carbamoyltransferase superfamily. OTCase family.

It is found in the cytoplasm. The enzyme catalyses carbamoyl phosphate + L-ornithine = L-citrulline + phosphate + H(+). It participates in amino-acid biosynthesis; L-arginine biosynthesis; L-arginine from L-ornithine and carbamoyl phosphate: step 1/3. Its function is as follows. Reversibly catalyzes the transfer of the carbamoyl group from carbamoyl phosphate (CP) to the N(epsilon) atom of ornithine (ORN) to produce L-citrulline. This is Ornithine carbamoyltransferase from Thermobifida fusca (strain YX).